Reading from the N-terminus, the 353-residue chain is MSQLITKAALRVLLVCGRGNCNMFVSSVSSTSVMKSPYEITAPMRIHDWCGGFGDFKIGSKHVQGNFNLRWMGMSSASAMEKKDENLTVKKGQNGGGSVAVPSYWGIETAKMKITRKDGSDWPWNCFMPWETYQANLSIDLKKHHVPKNIADKVAYRIVKLLRIPTDIFFQRRYGCRAMMLETVAAVPGMVGGMLLHLKSIRKFEHSGGWIKALLEEAENERMHLMTMMELVKPKWYERLLVMLVQGIFFNSFFVCYVISPRLAHRVVGYLEEEAIHSYTEFLKDIDNGKIENVAAPAIAIDYWRLPKDATLKDVVTVIRADEAHHRDVNHFASDIRNQGKELREAAAPIGYH.

Residues 1-21 (MSQLITKAALRVLLVCGRGNC) constitute a mitochondrion transit peptide. A helical membrane pass occupies residues 178–198 (AMMLETVAAVPGMVGGMLLHL). Fe cation is bound by residues glutamate 182, glutamate 221, and histidine 224. The helical transmembrane segment at 240–260 (LLVMLVQGIFFNSFFVCYVIS) threads the bilayer. Glutamate 272, glutamate 323, and histidine 326 together coordinate Fe cation.

Belongs to the alternative oxidase family. Homodimer; disulfide-linked. Fe cation serves as cofactor. As to expression, maximally expressed in dry seeds. Detected in roots, stems and leaves.

It is found in the mitochondrion inner membrane. The catalysed reaction is 2 a ubiquinol + O2 = 2 a ubiquinone + 2 H2O. In terms of biological role, catalyzes the cyanide-resistant oxidation of ubiquinol and the reduction of molecular oxygen to water, but does not translocate protons and consequently is not linked to oxidative phosphorylation. May increase respiration when the cytochrome respiratory pathway is restricted, or in response to low temperatures. In Arabidopsis thaliana (Mouse-ear cress), this protein is Ubiquinol oxidase 2, mitochondrial (AOX2).